A 465-amino-acid chain; its full sequence is Plasma alpha-L-fucosidase (465 aa).

The N-terminal stretch at 1-26 (MRPQELPRLAFPLLLLLLLPPPPCPA) is a signal peptide. 2 N-linked (GlcNAc...) asparagine glycosylation sites follow: Asn-169 and Asn-237. Phosphoserine is present on Ser-299. N-linked (GlcNAc...) asparagine glycosylation occurs at Asn-375.

Belongs to the glycosyl hydrolase 29 family. As to quaternary structure, homotetramer.

The protein resides in the secreted. It catalyses the reaction an alpha-L-fucoside + H2O = L-fucose + an alcohol. Alpha-L-fucosidase is responsible for hydrolyzing the alpha-1,6-linked fucose joined to the reducing-end N-acetylglucosamine of the carbohydrate moieties of glycoproteins. This chain is Plasma alpha-L-fucosidase (FUCA2), found in Pongo abelii (Sumatran orangutan).